Here is a 122-residue protein sequence, read N- to C-terminus: Insulin-like 3 (122 aa).

A signal peptide spans 1–15 (MRAPLLLMLLALGSA). Cystine bridges form between cysteine 29-cysteine 107, cysteine 41-cysteine 120, and cysteine 106-cysteine 111.

Belongs to the insulin family. In terms of assembly, heterodimer of a B chain and an A chain linked by two disulfide bonds. As to expression, expressed exclusively in Leydig cells of the testis.

The protein localises to the secreted. Its function is as follows. Seems to play a role in testicular function. May be a trophic hormone with a role in testicular descent in fetal life. Is a ligand for LGR8 receptor. This chain is Insulin-like 3 (Insl3), found in Mus musculus (Mouse).